The sequence spans 407 residues: MGCMSSKYADTSGGEVIQKKLSDTQTSNSSTTGSQNARVPVLENWLNIVLRGKPQNVESSGVRVKGNSTSGGNDIKVLLLGAGDSGKTTIMKQMRLLYSPGFSQVVRKQYRVMIFENIISSLCLLLEAMDNSNVSLLPENEKYRAVILRKHTSQPNEPFSPEIYEAVHALTLDTKLRTVQSCGTNLSLLDNFYYYQDHIDRIFDPQYIPSDQDILHCRIKTTGISEETFLLNRHHYRFFDVGGQRSERRKWIHCFENVTALLFLVSLAGYDQCLVEDNSGNQMQEALLLWDSICNSSWFSESAMILFLNKLDLFKRKVHISPIQKHFPDYQEVGSTPTFVQTQCPLADNAVRSGMYYFYLKFESLNRIASRSCYCHFTTATDTSLLQRVMVSVQDTIMSNNLQSLMF.

Gly-2 is lipidated: N-myristoyl glycine. Cys-3 carries S-palmitoyl cysteine lipidation. Positions 73-407 (NDIKVLLLGA…MSNNLQSLMF (335 aa)) constitute a G-alpha domain. The segment at 76–89 (KVLLLGAGDSGKTT) is G1 motif. Residues Asp-84, Ser-85, Gly-86, Lys-87, Thr-88, Thr-89, Asp-190, Leu-215, Thr-221, Gly-243, Asn-309, Lys-310, Asp-312, and Ala-380 each coordinate GTP. A Mg(2+)-binding site is contributed by Thr-88. Positions 213–221 (DILHCRIKT) are G2 motif. Thr-221 contributes to the Mg(2+) binding site. Residues 236-245 (YRFFDVGGQR) form a G3 motif region. The interval 305-312 (ILFLNKLD) is G4 motif. A G5 motif region spans residues 378-383 (TTATDT).

The protein belongs to the G-alpha family. G(q) subfamily. As to quaternary structure, g proteins are composed of 3 units; alpha, beta and gamma. The alpha chain contains the guanine nucleotide binding site. Mg(2+) is required as a cofactor.

Implicated in the mating and sporulation pathway. Probably coupled to mating-factor receptors. May act in concert with Ras1. The chain is Guanine nucleotide-binding protein alpha-1 subunit (gpa1) from Schizosaccharomyces pombe (strain 972 / ATCC 24843) (Fission yeast).